Consider the following 138-residue polypeptide: Low molecular weight protein-tyrosine-phosphatase PtpB (138 aa).

The active-site Nucleophile is Cys-7. Residue Arg-13 is part of the active site. The active-site Proton donor is Asp-111.

It belongs to the low molecular weight phosphotyrosine protein phosphatase family.

The enzyme catalyses O-phospho-L-tyrosyl-[protein] + H2O = L-tyrosyl-[protein] + phosphate. Its function is as follows. Dephosphorylates the phosphotyrosine-containing proteins. This chain is Low molecular weight protein-tyrosine-phosphatase PtpB (ptpB), found in Staphylococcus haemolyticus (strain JCSC1435).